A 415-amino-acid polypeptide reads, in one-letter code: Serine hydroxymethyltransferase 1 (415 aa).

(6S)-5,6,7,8-tetrahydrofolate contacts are provided by residues Leu-122 and 126–128 (GHL). An N6-(pyridoxal phosphate)lysine modification is found at Lys-230.

The protein belongs to the SHMT family. As to quaternary structure, homodimer. Pyridoxal 5'-phosphate is required as a cofactor.

It is found in the cytoplasm. The catalysed reaction is (6R)-5,10-methylene-5,6,7,8-tetrahydrofolate + glycine + H2O = (6S)-5,6,7,8-tetrahydrofolate + L-serine. It participates in one-carbon metabolism; tetrahydrofolate interconversion. The protein operates within amino-acid biosynthesis; glycine biosynthesis; glycine from L-serine: step 1/1. Functionally, catalyzes the reversible interconversion of serine and glycine with tetrahydrofolate (THF) serving as the one-carbon carrier. This reaction serves as the major source of one-carbon groups required for the biosynthesis of purines, thymidylate, methionine, and other important biomolecules. Also exhibits THF-independent aldolase activity toward beta-hydroxyamino acids, producing glycine and aldehydes, via a retro-aldol mechanism. The chain is Serine hydroxymethyltransferase 1 from Burkholderia thailandensis (strain ATCC 700388 / DSM 13276 / CCUG 48851 / CIP 106301 / E264).